Reading from the N-terminus, the 483-residue chain is Glutamyl-tRNA(Gln) amidotransferase subunit A (483 aa).

Residues lysine 76 and serine 151 each act as charge relay system in the active site. The active-site Acyl-ester intermediate is serine 175.

It belongs to the amidase family. GatA subfamily. In terms of assembly, heterotrimer of A, B and C subunits.

The enzyme catalyses L-glutamyl-tRNA(Gln) + L-glutamine + ATP + H2O = L-glutaminyl-tRNA(Gln) + L-glutamate + ADP + phosphate + H(+). Allows the formation of correctly charged Gln-tRNA(Gln) through the transamidation of misacylated Glu-tRNA(Gln) in organisms which lack glutaminyl-tRNA synthetase. The reaction takes place in the presence of glutamine and ATP through an activated gamma-phospho-Glu-tRNA(Gln). The protein is Glutamyl-tRNA(Gln) amidotransferase subunit A of Pseudomonas putida (strain GB-1).